Reading from the N-terminus, the 419-residue chain is L-rhamnose isomerase (419 aa).

Mn(2+)-binding residues include histidine 262, aspartate 294, and aspartate 296.

Belongs to the rhamnose isomerase family. Homotetramer. Requires Mn(2+) as cofactor.

The protein resides in the cytoplasm. The catalysed reaction is L-rhamnopyranose = L-rhamnulose. It participates in carbohydrate degradation; L-rhamnose degradation; glycerone phosphate from L-rhamnose: step 1/3. Functionally, catalyzes the interconversion of L-rhamnose and L-rhamnulose. In Escherichia coli O127:H6 (strain E2348/69 / EPEC), this protein is L-rhamnose isomerase.